Consider the following 518-residue polypeptide: MTQLPTAGPVIRRFDMSAQFTALYRISVALSQESNTARALAAILEVLHDHAFMQYGMVCLFDKERNALFVESLHGIDGERKKETRHVRYRMGEGVIGAVMSQRQALVLPRISDDQRFLDRLNIYDYSLPLIGVPIPGADNQPAGVLVAQPMALHEDRLAASTRFLEMVANLISQPLRSATPPESLPAQTPVRCSVPRQFGFEQMVGKSQAMRQTMDILRQVSKWDTTVLVRGESGTGKELIANAIHYNSPRAAAPFVKFNCAALPDNLLESELFGHEKGAFTGAIRTRKGRFELADGGTLFLDEIGESSASFQAKLLRILQEGEMERVGGDTTLKVDVRIIAATNRNLEEEVRAGNFREDLYYRLNVMPVSLPALRERLDDIADLAPFLVKKIALRQGRELRISDGAVRLLMTYSWPGNVRELENCLERASVMTDEGLIDRDVILFNHHESPALSVKPGLPLATDESWLDQELDERQRVIAALEKTGWVQAKAARLLGMTPRQIAYRIQIMDINMHRI.

The GAF domain occupies 35-176; the sequence is NTARALAAIL…MVANLISQPL (142 aa). The 228-residue stretch at 205-432 folds into the Sigma-54 factor interaction domain; it reads VGKSQAMRQT…LENCLERASV (228 aa). ATP contacts are provided by residues 232-239 and 295-304; these read GESGTGKE and ADGGTLFLDE. Positions 433–475 are inter-domain linker; sequence MTDEGLIDRDVILFNHHESPALSVKPGLPLATDESWLDQELDE. Positions 476-518 are C-terminal DNA-binding domain; the sequence is RQRVIAALEKTGWVQAKAARLLGMTPRQIAYRIQIMDINMHRI. Residues 490–509 constitute a DNA-binding region (H-T-H motif); it reads QAKAARLLGMTPRQIAYRIQ.

Interacts with sigma-54.

In terms of biological role, required for activation of most nif operons, which are directly involved in nitrogen fixation. The polypeptide is Nif-specific regulatory protein (nifA) (Enterobacter agglomerans (Erwinia herbicola)).